A 519-amino-acid chain; its full sequence is U3 small nucleolar RNA-associated protein 15 homolog (519 aa).

A2 is subject to N-acetylalanine. WD repeat units lie at residues 36–75 (KEFGAVSKVDFSPQPPYNYAVTASSRIHIYGRYSQEPIKT), 78–117 (RFKDTAYCATFRQDGRLLVAGSEDGGVQLFDISGRAPLRQ), 120–159 (GHTKAVHSVDFTADKYHVVSGADDYTVKLWDIPNSKEILT), 162–202 (EHSD…SVIS), 204–242 (EHGQPVESVLLFPSGGLLVSAGGRYVKVWDMLKGGQLLV), 246–285 (NHHKTVTCLCLSSSGQRLLSGSLDRKVKVYSTTSYKVVHS), and 287–326 (DYTASILSLALAHEDETIVVGMTNGILSVKHRKSEAKKDS). A Glycyl lysine isopeptide (Lys-Gly) (interchain with G-Cter in SUMO2) cross-link involves residue K249.

As to quaternary structure, part of the small subunit (SSU) processome, composed of more than 70 proteins and the RNA chaperone small nucleolar RNA (snoRNA) U3. May be a component of the proposed t-UTP subcomplex of the ribosomal small subunit (SSU) processome containing at least UTP4, WDR43, HEATR1, UTP15, WDR75. Interacts directly with UTP4 and WDR43.

Its subcellular location is the nucleus. The protein localises to the nucleolus. In terms of biological role, ribosome biogenesis factor. Involved in nucleolar processing of pre-18S ribosomal RNA. Required for optimal pre-ribosomal RNA transcription by RNA polymerase I. Part of the small subunit (SSU) processome, first precursor of the small eukaryotic ribosomal subunit. During the assembly of the SSU processome in the nucleolus, many ribosome biogenesis factors, an RNA chaperone and ribosomal proteins associate with the nascent pre-rRNA and work in concert to generate RNA folding, modifications, rearrangements and cleavage as well as targeted degradation of pre-ribosomal RNA by the RNA exosome. In Bos taurus (Bovine), this protein is U3 small nucleolar RNA-associated protein 15 homolog.